A 151-amino-acid polypeptide reads, in one-letter code: UPF0208 membrane protein plu3094 (151 aa).

2 consecutive transmembrane segments (helical) span residues 46–65 and 69–91; these read FGIR…QIAL and LGPA…WWLG.

The protein belongs to the UPF0208 family.

Its subcellular location is the cell inner membrane. The chain is UPF0208 membrane protein plu3094 from Photorhabdus laumondii subsp. laumondii (strain DSM 15139 / CIP 105565 / TT01) (Photorhabdus luminescens subsp. laumondii).